The sequence spans 928 residues: MDESSRIASSSALHGLDEMVSAHKPSPPLPSRRKGKSALRSALEKKNRKSKSKPKVTITSDTPKVSSQHSPVSSAYTGDSTTDLDSKSGHSSSQKLSNKVSSALKLTIPKRWRSSKSSSSQCSSPFLPTSSSNGHGDDASLNLPDKKSRPSSQSSIFLSNWSTIFSSNASPTDSQLSPTHTSTIAELAASTLSIFPSGSYAGSTFGSPSRSSIDSSTYLPRSKSVNSLSSNFSARTPASNQSSVSEDFGAAPNCDHKHNSVTLSDFALPDIDQHDTVETILEKVEFTIPKQFTPAILSQGTSSLLKLCLRKYLSVVNFKCISLDMALRKFLAVYVLPNETQQIDRVLSTFSDQYFHCNPDLYDSSDECYILTFSLMILHTDFFNIHNRQKMTRAEFISNTNLPTILPEILECFYDNITYTPFVHVEHIGCVVTSPSNEKPSLSQRLGDSQFRLTKRNTFATESDHQALQEQLTGFRINLDSILDLKKIDSVRTSIESPTRTADDLYKEFARAPFLQIVSHRSQPQAFSYHFEPSAESESTNPAIINVKVFKLGILIQNEKVRKDRLLSNREVGVILTSSQLMFFKNVYWISGLLDQLEDFKRSHSFSPCYFSPHLTSLSADYIIPLSDLVAYGDGSRIENELYSFSVKQKNQRTHVFSVTNVDELNDWLVKINFVSTFATAGLAPRERLPCVESSDKSIKASVSVLPDIYEDSDAMSKASKETRSEVLECSKVRVYIVQNRIYKLEEALRQGESKMTVQRRNAANILHLEPIQSRTRIRLARCSNTLKKNMLAQMIEIQKFKISIKFLKEDLEMDSHLQDYLRSVFPSSVMGKENASEDTILESNFRNHSNPSVRRSNLRVGKTVESVQNTKLKSVENDSGKAETETVGKNPEVVRKSPAKLPNIANIMTVNGHRYSVVELPDDFLRE.

Polar residues-rich tracts occupy residues 1-12 and 57-83; these read MDESSRIASSSA and TITSDTPKVSSQHSPVSSAYTGDSTTD. 2 disordered regions span residues 1-152 and 227-249; these read MDES…RPSS and SLSSNFSARTPASNQSSVSEDFG. At Ser67 the chain carries Phosphoserine. Composition is skewed to low complexity over residues 89–102 and 115–132; these read GHSSSQKLSNKVSS and SKSSSSQCSSPFLPTSSS. Positions 228-420 constitute an SEC7 domain; the sequence is LSSNFSARTP…ECFYDNITYT (193 aa). Residues 234–245 show a composition bias toward polar residues; that stretch reads ARTPASNQSSVS. Positions 548–677 constitute a PH domain; the sequence is KVFKLGILIQ…WLVKINFVST (130 aa).

The protein resides in the cytoplasm. Its subcellular location is the cell tip. In terms of biological role, guanine nucleotide exchange factor for Arf GTPases, stimulating the nucleotide exchange from the GDP-bound to the GTP-bound form. Involved in vesicular transport. This Schizosaccharomyces pombe (strain 972 / ATCC 24843) (Fission yeast) protein is Arf guanine nucleotide exchange factor sec74 (sec74).